The chain runs to 243 residues: 23S rRNA (guanosine-2'-O-)-methyltransferase RlmB (243 aa).

S-adenosyl-L-methionine contacts are provided by Gly-196, Ile-216, and Leu-225.

Belongs to the class IV-like SAM-binding methyltransferase superfamily. RNA methyltransferase TrmH family. RlmB subfamily. Homodimer.

The protein localises to the cytoplasm. It catalyses the reaction guanosine(2251) in 23S rRNA + S-adenosyl-L-methionine = 2'-O-methylguanosine(2251) in 23S rRNA + S-adenosyl-L-homocysteine + H(+). Functionally, specifically methylates the ribose of guanosine 2251 in 23S rRNA. The chain is 23S rRNA (guanosine-2'-O-)-methyltransferase RlmB from Salmonella typhimurium (strain LT2 / SGSC1412 / ATCC 700720).